The chain runs to 183 residues: ARS-binding factor 2, mitochondrial (183 aa).

A mitochondrion-targeting transit peptide spans 1 to 26; the sequence is MNSYSLLTRSFHESSKPLFNLASTLL. 2 DNA-binding regions (HMG box) span residues 43-111 and 116-183; these read PKRP…KEFD and PKKP…YPLN.

The protein localises to the mitochondrion. It is found in the nucleus. In terms of biological role, specific binding to the autonomously replicating sequence 1 (ARS1). Interaction with regulatory regions: probably involved in compacting the mitochondrial genome. It might play a positive role in gene expression and replication. The polypeptide is ARS-binding factor 2, mitochondrial (ABF2) (Saccharomyces cerevisiae (strain ATCC 204508 / S288c) (Baker's yeast)).